A 95-amino-acid polypeptide reads, in one-letter code: MNEERLFEILLAPHISEKGALTTGQYVFEVMPDATKPEIKRAVEKQFNVTVKSVRTCNVKGKTTRFRQVRGRRKNWKKAYVMLAPGSEIDIAAGE.

The protein belongs to the universal ribosomal protein uL23 family. Part of the 50S ribosomal subunit. Contacts protein L29, and trigger factor when it is bound to the ribosome.

One of the early assembly proteins it binds 23S rRNA. One of the proteins that surrounds the polypeptide exit tunnel on the outside of the ribosome. Forms the main docking site for trigger factor binding to the ribosome. The polypeptide is Large ribosomal subunit protein uL23 (Coxiella burnetii (strain RSA 493 / Nine Mile phase I)).